The sequence spans 101 residues: Small ribosomal subunit protein uS14 (101 aa).

It belongs to the universal ribosomal protein uS14 family. In terms of assembly, part of the 30S ribosomal subunit. Contacts proteins S3 and S10.

In terms of biological role, binds 16S rRNA, required for the assembly of 30S particles and may also be responsible for determining the conformation of the 16S rRNA at the A site. The protein is Small ribosomal subunit protein uS14 of Haemophilus influenzae (strain PittGG).